The sequence spans 350 residues: Arginine N-succinyltransferase (350 aa).

Leucine 125 serves as a coordination point for succinyl-CoA. Histidine 229 serves as the catalytic Proton donor.

This sequence belongs to the arginine N-succinyltransferase family.

It carries out the reaction succinyl-CoA + L-arginine = N(2)-succinyl-L-arginine + CoA + H(+). Its pathway is amino-acid degradation; L-arginine degradation via AST pathway; L-glutamate and succinate from L-arginine: step 1/5. Its function is as follows. Catalyzes the transfer of succinyl-CoA to arginine to produce N(2)-succinylarginine. This chain is Arginine N-succinyltransferase, found in Yersinia pestis.